We begin with the raw amino-acid sequence, 95 residues long: Large ribosomal subunit protein bL25 (95 aa).

Belongs to the bacterial ribosomal protein bL25 family. In terms of assembly, part of the 50S ribosomal subunit; part of the 5S rRNA/L5/L18/L25 subcomplex. Contacts the 5S rRNA. Binds to the 5S rRNA independently of L5 and L18.

Functionally, this is one of the proteins that binds to the 5S RNA in the ribosome where it forms part of the central protuberance. This Shewanella putrefaciens (strain CN-32 / ATCC BAA-453) protein is Large ribosomal subunit protein bL25.